The primary structure comprises 508 residues: CXXC-type zinc finger protein 1 (508 aa).

The CXXC-type zinc finger occupies 10 to 47; the sequence is EDVWKERCMNCIRCNDEKNCGTCWPCRNGKTCDMRKCF. Disordered regions lie at residues 95–156 and 453–508; these read QQVE…EPDK and KSQS…TQNN. Composition is skewed to low complexity over residues 113 to 123 and 454 to 481; these read AAAAAQQRKAN and SQST…SSSS.

As to quaternary structure, component of the SET2 complex (also known as the SET1/COMPASS complex), which contains at least set-2, swd-2.1, cfp-1, rbbp-5, wdr-5.1, dpy-30 and ash-2. Within the complex, interacts with wdr-5.1, ash-2 and dpy-30. Also interacts with the SIN3S complex, which contains at least sin-3, hda-1, athp-1 and mrg-1. Interacts with sin-3, hda-1 and mrg-1.

It is found in the nucleus. In terms of biological role, transcriptional activator that exhibits a unique DNA binding specificity for CpG motifs; enriched at promoters containing the trimethylation mark on histone H3 'Lys-4' (H3K4me3). Forms part of the SET2 complex and interacts with the SIN3S HDAC complex at promoters. Required for H3K4 trimethylation and plays a repressive role in the expression of heat shock and salt-inducible genes. Required for fertility, in cooperation with class I histone deacetylases (HDACs). The polypeptide is CXXC-type zinc finger protein 1 (Caenorhabditis elegans).